We begin with the raw amino-acid sequence, 219 residues long: Leukocyte surface antigen CD53 (219 aa).

Topologically, residues 1 to 11 (MGMSSLKLLKF) are cytoplasmic. A helical membrane pass occupies residues 12 to 32 (VLFFFNLIFWFCGCCILGLGI). The Extracellular segment spans residues 33–54 (YLLIHSKFGVLFHNLPSLTLGN). Residues 55 to 69 (VLVIVGSVIMVVAFL) traverse the membrane as a helical segment. At 70–80 (GCMGSIKENKC) the chain is on the cytoplasmic side. A helical membrane pass occupies residues 81-106 (LLMSFFVLLLIILLAEVTLAILLFVY). Residues 107 to 181 (EQKLKEYVAE…IQAKQWFHSN (75 aa)) are Extracellular-facing. N-linked (GlcNAc...) asparagine glycosylation is found at Asn129 and Asn148. Residues 182–206 (FLYIGITTICVCVIQVLGMSFALTL) traverse the membrane as a helical segment. Topologically, residues 207–219 (NCQIDKTSQVLGL) are cytoplasmic.

This sequence belongs to the tetraspanin (TM4SF) family. As to quaternary structure, interacts with SCIMP. Interacts with CD45/PTPRC. Interacts with IL7R. Interacts with RBL2 and PPP2CA.

It is found in the cell membrane. Its subcellular location is the cell junction. The protein localises to the membrane. The protein resides in the synapse. Functionally, structural component of specialized membrane microdomains known as tetraspanin-enriched microdomains (TERMs), which act as platforms for receptor clustering and signaling. Participates thereby in diverse biological functions such as cell signal transduction, adhesion, migration and protein trafficking. Plays a role in the activation of monocytes and B-cells. Acts as an essential regulator of B-cell development by promoting interleukin-7 receptor/IL7R signaling. Also promotes, in B-cells, the BCR signaling by recruiting PKC to the plasma membrane in order to phosphorylate its substrates. Plays an essential role in B- and T-cells homing to lymph nodes by stabilizing L-selectin/SELL cell surface expression. Also mediates metabolic and inflammatory functions in hepatocytes and adipose tissue by promoting TNF-alpha and LPS signaling independent of the immune compartment. The chain is Leukocyte surface antigen CD53 (CD53) from Bos taurus (Bovine).